The primary structure comprises 538 residues: MRHVQAETSPSSEPEAGPSQPAVRQGALQGGLLMGYSPAGGATSPGVYQVSIFSPPAGASEPPRALKRPAPPTEGPRELKRGPGLGAREGLSPEEPPTVGLLGPEGLGLKLGVASQHFCHHGLCVVEQGGSSTSPWTSGARSSPLPPSNASCSTLHTRDWASPDPRGQGSLGSSLGPAPPGQLHTLDTDLHSLAQIGGKSLVSGVGNGGSPWPRESPGTANGCSPEHTPPGPGPPGPCPTKRRLLPAGEALDVSSEDEGPAPRRRRGTLGHPPAANSSDAKATPFWSHLLPGPKEPVLDPTDCNPMGRRLKGARRLKLSSLRSLRKGPGLLSPPSASPVPAPAVSRTLLGNFEESLLRGRFAPSGRIEGFTAEIGASGSYCPQHVTLPVTVTFFDVSEQNAPAPFLGVVDLSPLGRKGYSVPKVGTIQVTLFNPNQTVVKMFLVTFDFSDMPAAHMTFLRHRLFLVPVGEEGNAGPTRRLLCYLLHLRFRSSRSGRLSLHGDIRLLFSRRSLELDTGLPYELQAVTEAPHNPRYSPLP.

2 stretches are compositionally biased toward polar residues: residues 1-12 (MRHVQAETSPSS) and 129-141 (GGSS…SGAR). 3 disordered regions span residues 1-98 (MRHV…EPPT), 129-185 (GGSS…QLHT), and 201-303 (LVSG…PTDC). Pro residues predominate over residues 227–238 (HTPPGPGPPGPC). Residues S254 and S255 each carry the phosphoserine modification. Residues 348 to 430 (LLGNFEESLL…VPKVGTIQVT (83 aa)) form a required for macropage invasion region. The transactivation domain 1 (TAD1) stretch occupies residues 436–444 (QTVVKMFLV).

This sequence belongs to the ATOS family.

The protein localises to the nucleus. Functionally, transcription regulator that may syncronize transcriptional and translational programs. The sequence is that of Atos homolog protein B from Bos taurus (Bovine).